The chain runs to 431 residues: Venom metalloproteinase 1 (431 aa).

A signal peptide spans 1-22; that stretch reads MDLFILTRFILFLSFFMKSIHC. 4 N-linked (GlcNAc...) asparagine glycosylation sites follow: Asn64, Asn113, Asn148, and Asn187. A Peptidase M12B domain is found at 228-428; sequence DLLMKTSRRL…TSAACLKDTY (201 aa). Cystine bridges form between Cys340–Cys423 and Cys379–Cys407. His363 provides a ligand contact to Zn(2+). The active site involves Glu364. Zn(2+) contacts are provided by His367 and His373. An N-linked (GlcNAc...) asparagine glycan is attached at Asn414.

In the C-terminal section; belongs to the venom metalloproteinase (M12B) family. As to quaternary structure, monomer. Zn(2+) serves as cofactor. Expressed by the venom gland.

Its subcellular location is the secreted. The gelatinase activity is inhibited by EDTA. The recombinant protein has gelatinase activity. In vivo, injection of this recombinant into fifth instar L.oleracea (host) larvae results in partial insect mortality associated with the molt to sixth instar, with surviving insects showing retarded development and growth. This Eulophus pennicornis (Parasitoid wasp) protein is Venom metalloproteinase 1.